The chain runs to 877 residues: DNA (cytosine-5)-methyltransferase 3A (877 aa).

3 disordered regions span residues M1–H154, E194–E250, and A412–K431. Basic and acidic residues-rich tracts occupy residues K107–R133 and E195–E206. The span at P210–T225 shows a compositional bias: polar residues. Residues T226 to S284 enclose the PWWP domain. The segment covering A234–D244 has biased composition (basic and acidic residues). The ADD domain maps to E447–D579. The segment at I458–E488 adopts a GATA-type; atypical zinc-finger fold. Residues Q499–G555 form a PHD-type; atypical zinc finger. In terms of domain architecture, SAM-dependent MTase C5-type spans I599–V877. Residues D606–T610, E629, and D651–R653 each bind S-adenosyl-L-methionine. The active site involves C675. An S-adenosyl-L-methionine-binding site is contributed by R856–W858.

The protein belongs to the class I-like SAM-binding methyltransferase superfamily. C5-methyltransferase family.

The protein resides in the nucleus. The protein localises to the chromosome. It localises to the cytoplasm. The enzyme catalyses a 2'-deoxycytidine in DNA + S-adenosyl-L-methionine = a 5-methyl-2'-deoxycytidine in DNA + S-adenosyl-L-homocysteine + H(+). The catalysed reaction is L-cysteinyl-[protein] + S-adenosyl-L-methionine = S-methyl-L-cysteinyl-[protein] + S-adenosyl-L-homocysteine + H(+). Its function is as follows. Required for genome-wide de novo methylation and is essential for development. DNA methylation is coordinated with methylation of histones. It modifies DNA in a non-processive manner and also methylates non-CpG sites. Acts as a transcriptional corepressor for ZNF238. Can actively repress transcription through the recruitment of HDAC activity. Also has weak auto-methylation activity on some Cys residue in absence of DNA. The protein is DNA (cytosine-5)-methyltransferase 3A (DNMT3A) of Gallus gallus (Chicken).